The sequence spans 610 residues: Glutamine--fructose-6-phosphate aminotransferase [isomerizing] (610 aa).

The active-site Nucleophile; for GATase activity is Cys-2. Residues 2–218 (CGIVGAVAQR…EGDVAEITRR (217 aa)) form the Glutamine amidotransferase type-2 domain. 2 consecutive SIS domains span residues 286 to 426 (AAEI…QQGR) and 459 to 600 (LATD…VDQP). Lys-605 serves as the catalytic For Fru-6P isomerization activity.

Homodimer.

It localises to the cytoplasm. The enzyme catalyses D-fructose 6-phosphate + L-glutamine = D-glucosamine 6-phosphate + L-glutamate. Functionally, catalyzes the first step in hexosamine metabolism, converting fructose-6P into glucosamine-6P using glutamine as a nitrogen source. The protein is Glutamine--fructose-6-phosphate aminotransferase [isomerizing] of Vibrio vulnificus (strain CMCP6).